Consider the following 82-residue polypeptide: High-potential iron-sulfur protein (82 aa).

4 residues coordinate [4Fe-4S] cluster: C42, C45, C60, and C74.

It belongs to the high-potential iron-sulfur protein (HiPIP) family. As to quaternary structure, homodimer.

The protein resides in the periplasm. In terms of biological role, specific class of high-redox-potential 4Fe-4S ferredoxins. Functions in anaerobic electron transport in most purple and in some other photosynthetic bacteria and in at least one genus (Paracoccus) of halophilic, denitrifying bacteria. This Marichromatium purpuratum (Chromatium purpuratum) protein is High-potential iron-sulfur protein (hip).